A 276-amino-acid chain; its full sequence is 4-deoxy-L-threo-5-hexosulose-uronate ketol-isomerase (276 aa).

Zn(2+)-binding residues include H194, H196, E201, and H243.

It belongs to the KduI family. Zn(2+) is required as a cofactor.

The enzyme catalyses 5-dehydro-4-deoxy-D-glucuronate = 3-deoxy-D-glycero-2,5-hexodiulosonate. It functions in the pathway glycan metabolism; pectin degradation; 2-dehydro-3-deoxy-D-gluconate from pectin: step 4/5. Functionally, catalyzes the isomerization of 5-dehydro-4-deoxy-D-glucuronate to 3-deoxy-D-glycero-2,5-hexodiulosonate. This chain is 4-deoxy-L-threo-5-hexosulose-uronate ketol-isomerase, found in Caldicellulosiruptor bescii (strain ATCC BAA-1888 / DSM 6725 / KCTC 15123 / Z-1320) (Anaerocellum thermophilum).